A 230-amino-acid polypeptide reads, in one-letter code: 5'-methylthioadenosine/S-adenosylhomocysteine nucleosidase (230 aa).

Glutamate 12 (proton acceptor) is an active-site residue. Substrate-binding positions include glycine 78, isoleucine 153, and 174-175 (ME). The active-site Proton donor is the aspartate 198.

Belongs to the PNP/UDP phosphorylase family. MtnN subfamily.

The enzyme catalyses S-adenosyl-L-homocysteine + H2O = S-(5-deoxy-D-ribos-5-yl)-L-homocysteine + adenine. It catalyses the reaction S-methyl-5'-thioadenosine + H2O = 5-(methylsulfanyl)-D-ribose + adenine. It carries out the reaction 5'-deoxyadenosine + H2O = 5-deoxy-D-ribose + adenine. The protein operates within amino-acid biosynthesis; L-methionine biosynthesis via salvage pathway; S-methyl-5-thio-alpha-D-ribose 1-phosphate from S-methyl-5'-thioadenosine (hydrolase route): step 1/2. In terms of biological role, catalyzes the irreversible cleavage of the glycosidic bond in both 5'-methylthioadenosine (MTA) and S-adenosylhomocysteine (SAH/AdoHcy) to adenine and the corresponding thioribose, 5'-methylthioribose and S-ribosylhomocysteine, respectively. Also cleaves 5'-deoxyadenosine, a toxic by-product of radical S-adenosylmethionine (SAM) enzymes, into 5-deoxyribose and adenine. In Shewanella piezotolerans (strain WP3 / JCM 13877), this protein is 5'-methylthioadenosine/S-adenosylhomocysteine nucleosidase.